Consider the following 258-residue polypeptide: Malonyl-[acyl-carrier protein] O-methyltransferase (258 aa).

It belongs to the methyltransferase superfamily.

The enzyme catalyses malonyl-[ACP] + S-adenosyl-L-methionine = malonyl-[ACP] methyl ester + S-adenosyl-L-homocysteine. It functions in the pathway cofactor biosynthesis; biotin biosynthesis. Converts the free carboxyl group of a malonyl-thioester to its methyl ester by transfer of a methyl group from S-adenosyl-L-methionine (SAM). It allows to synthesize pimeloyl-ACP via the fatty acid synthetic pathway. This Haemophilus ducreyi (strain 35000HP / ATCC 700724) protein is Malonyl-[acyl-carrier protein] O-methyltransferase.